We begin with the raw amino-acid sequence, 160 residues long: SsrA-binding protein (160 aa).

A disordered region spans residues arginine 134–glycine 160. Positions aspartate 138–glycine 160 are enriched in basic and acidic residues.

This sequence belongs to the SmpB family.

Its subcellular location is the cytoplasm. Functionally, required for rescue of stalled ribosomes mediated by trans-translation. Binds to transfer-messenger RNA (tmRNA), required for stable association of tmRNA with ribosomes. tmRNA and SmpB together mimic tRNA shape, replacing the anticodon stem-loop with SmpB. tmRNA is encoded by the ssrA gene; the 2 termini fold to resemble tRNA(Ala) and it encodes a 'tag peptide', a short internal open reading frame. During trans-translation Ala-aminoacylated tmRNA acts like a tRNA, entering the A-site of stalled ribosomes, displacing the stalled mRNA. The ribosome then switches to translate the ORF on the tmRNA; the nascent peptide is terminated with the 'tag peptide' encoded by the tmRNA and targeted for degradation. The ribosome is freed to recommence translation, which seems to be the essential function of trans-translation. The sequence is that of SsrA-binding protein from Azorhizobium caulinodans (strain ATCC 43989 / DSM 5975 / JCM 20966 / LMG 6465 / NBRC 14845 / NCIMB 13405 / ORS 571).